The sequence spans 332 residues: tRNA uridine(34) hydroxylase (332 aa).

In terms of domain architecture, Rhodanese spans 123–217 (SDPEVLLVDT…YLEEVKQEES (95 aa)). Cysteine 177 acts as the Cysteine persulfide intermediate in catalysis. Positions 302-332 (SDVGAVIQSRRDNKENLKKSQVKLNNKKYNK) are disordered. Residues 310 to 319 (SRRDNKENLK) are compositionally biased toward basic and acidic residues.

Belongs to the TrhO family.

It carries out the reaction uridine(34) in tRNA + AH2 + O2 = 5-hydroxyuridine(34) in tRNA + A + H2O. In terms of biological role, catalyzes oxygen-dependent 5-hydroxyuridine (ho5U) modification at position 34 in tRNAs. The protein is tRNA uridine(34) hydroxylase of Shewanella woodyi (strain ATCC 51908 / MS32).